Here is a 618-residue protein sequence, read N- to C-terminus: Membrane protein insertase YidC (618 aa).

Transmembrane regions (helical) follow at residues 3–23 (KNTITGLVLIGILLVGFSFLS), 363–383 (WGLSMGIVLLLLTIMVKIVVF), 439–459 (LPMLLQFPILMALFMFVPSAI), 478–498 (FITFPFHIPFLGNHLSLFCLL), 520–540 (PQMAAMKWMMYLMPIMFLFVL), and 545–565 (SGLNYYYFISTLISVVTMIIL).

This sequence belongs to the OXA1/ALB3/YidC family. Type 1 subfamily. In terms of assembly, interacts with the Sec translocase complex via SecD. Specifically interacts with transmembrane segments of nascent integral membrane proteins during membrane integration.

The protein localises to the cell membrane. Its function is as follows. Required for the insertion and/or proper folding and/or complex formation of integral membrane proteins into the membrane. Involved in integration of membrane proteins that insert both dependently and independently of the Sec translocase complex, as well as at least some lipoproteins. Aids folding of multispanning membrane proteins. In Bacteroides fragilis (strain YCH46), this protein is Membrane protein insertase YidC.